A 403-amino-acid polypeptide reads, in one-letter code: Ribosomal RNA large subunit methyltransferase I (403 aa).

The PUA domain occupies 9 to 88; it reads YPRLVLSKGR…ESIDIAFFTR (80 aa).

The protein belongs to the methyltransferase superfamily. RlmI family.

Its subcellular location is the cytoplasm. It catalyses the reaction cytidine(1962) in 23S rRNA + S-adenosyl-L-methionine = 5-methylcytidine(1962) in 23S rRNA + S-adenosyl-L-homocysteine + H(+). Its function is as follows. Specifically methylates the cytosine at position 1962 (m5C1962) of 23S rRNA. This chain is Ribosomal RNA large subunit methyltransferase I, found in Salmonella paratyphi A (strain ATCC 9150 / SARB42).